The sequence spans 248 residues: Protein PIMREG (248 aa).

The span at 1 to 10 shows a compositional bias: polar residues; that stretch reads MASRWQNMGT. The disordered stretch occupies residues 1–32; sequence MASRWQNMGTSVRRRSLQHQEQLEDSKELQPV. A phosphoserine mark is found at Ser11 and Ser16. 2 short sequence motifs (D-box) span residues 14–17 and 53–56; these read RRSL and RLPL. The tract at residues 117 to 205 is disordered; the sequence is KARRRKRGAQ…PSESDSDLEP (89 aa). Ser129 bears the Phosphoserine mark. Phosphoserine; by UHMK1; in vitro is present on Ser131. 2 stretches are compositionally biased toward polar residues: residues 132–143 and 186–198; these read PTHSLSQKSTRL and PYSS…SPSE. Residues Ser199 and Ser201 each carry the phosphoserine modification.

As to quaternary structure, isoform 1 and isoform 2 interact with PICALM; this interaction may target PICALM to the nucleus. During mitosis, associates with HDAC2 and MTA2 subunits of the chromatin-remodeling NuRD complex; this association is strongest at prometaphase and decreases as the cell progresses through metaphase and anaphase. In terms of processing, ubiquitinated by the anaphase-promoting complex/cyclosome (APC/C) complex in the presence of FZR1, leading to its degradation by the proteasome during mitotic exit. However, degradation is not essential for normal mitotic progression within a single cell cycle. In terms of tissue distribution, expressed in thymus (at protein level). Detected in spleen, colon, ovary and small intestines.

It localises to the nucleus. The protein localises to the nucleolus. Functionally, during mitosis, may play a role in the control of metaphase-to-anaphase transition. This chain is Protein PIMREG, found in Homo sapiens (Human).